We begin with the raw amino-acid sequence, 432 residues long: Polyamine export protein (432 aa).

Residues 1–201 (MIMELFHTIL…AEAGVLKTQE (201 aa)) form the CNNM transmembrane domain. The next 4 membrane-spanning stretches (helical) occupy residues 2-22 (IMEL…SAVV), 61-81 (FITV…GIGE), 100-120 (WIAP…FILF), and 138-158 (LSVV…VWFF). CBS domains follow at residues 220-279 (MTTR…NENV) and 286-345 (LLRK…SNEE).

This sequence belongs to the UPF0053 family. PaeA subfamily.

The protein localises to the cell inner membrane. In terms of biological role, involved in cadaverine and putrescine tolerance in stationary phase. May facilitate the efflux of both cadaverine and putrescine from the cytoplasm, reducing potentially toxic levels under certain stress conditions. The sequence is that of Polyamine export protein from Haemophilus influenzae (strain ATCC 51907 / DSM 11121 / KW20 / Rd).